The following is a 506-amino-acid chain: ATP synthase subunit alpha (506 aa).

ATP is bound at residue 169–176; that stretch reads GDRQTGKT.

This sequence belongs to the ATPase alpha/beta chains family. As to quaternary structure, F-type ATPases have 2 components, CF(1) - the catalytic core - and CF(0) - the membrane proton channel. CF(1) has five subunits: alpha(3), beta(3), gamma(1), delta(1), epsilon(1). CF(0) has three main subunits: a(1), b(2) and c(9-12). The alpha and beta chains form an alternating ring which encloses part of the gamma chain. CF(1) is attached to CF(0) by a central stalk formed by the gamma and epsilon chains, while a peripheral stalk is formed by the delta and b chains.

Its subcellular location is the cell membrane. The enzyme catalyses ATP + H2O + 4 H(+)(in) = ADP + phosphate + 5 H(+)(out). Produces ATP from ADP in the presence of a proton gradient across the membrane. The alpha chain is a regulatory subunit. The protein is ATP synthase subunit alpha of Lawsonia intracellularis (strain PHE/MN1-00).